Consider the following 332-residue polypeptide: MVCTTLYTVCAILFILFIYILLFRKMFHLITDTLIVILILSNCVEWSQGQMFTDDIYYNGNVETIINSTDPFNVESLCIYFPNAVVGSQGPGKSDGHLNDGNYAQTIATLFETKGFPKGSIILKTYTQTSDFINSVEMTCSYNIVIIPDSPNDSESIEQIAEWILNVWRCDDMNLEIYTYEQIGINNLWAAFGSDCDISVCPLDTTSNGIGCSPASTETYEVVSNDTQLALINVVDNVRHRIQMNTAQCKLKNCIKGEARLNTALIRISTSSSFDNSLSPLNNGQTTRSFKINAKKWWTIFYTIIDYINTIVQAMTPRHRAIYPEGWMLRYA.

The signal sequence occupies residues Met1 to Gly49.

It belongs to the rotavirus VP7 family. In terms of assembly, homotrimer; disulfide-linked. 2 Ca(2+) ions bound at each subunit interface in the trimer hold the trimer together. Interacts with the intermediate capsid protein VP6. Interacts with the outer capsid protein VP5*. In terms of processing, N-glycosylated. Intramolecular disulfide bonds.

It is found in the virion. Its subcellular location is the host endoplasmic reticulum lumen. Functionally, calcium-binding protein that interacts with rotavirus cell receptors once the initial attachment by VP4 has been achieved. Rotavirus attachment and entry into the host cell probably involves multiple sequential contacts between the outer capsid proteins VP4 and VP7, and the cell receptors. Following entry into the host cell, low intracellular or intravesicular Ca(2+) concentration probably causes the calcium-stabilized VP7 trimers to dissociate from the virion. This step is probably necessary for the membrane-disrupting entry step and the release of VP4, which is locked onto the virion by VP7. This is Outer capsid glycoprotein VP7 from Homo sapiens (Human).